The primary structure comprises 522 residues: UPF0288 protein MTH_1865 (522 aa).

It belongs to the UPF0288 family.

This Methanothermobacter thermautotrophicus (strain ATCC 29096 / DSM 1053 / JCM 10044 / NBRC 100330 / Delta H) (Methanobacterium thermoautotrophicum) protein is UPF0288 protein MTH_1865.